The sequence spans 243 residues: Epoxyqueuosine reductase QueH (243 aa).

The span at 1–16 shows a compositional bias: basic and acidic residues; the sequence is MHRTKLEQKQPHFDAQ. A disordered region spans residues 1 to 30; sequence MHRTKLEQKQPHFDAQKRRKKECKNSNTPF. [4Fe-4S] cluster-binding residues include cysteine 49, cysteine 50, cysteine 128, and cysteine 131. Residues cysteine 211 and cysteine 213 are joined by a disulfide bond.

Belongs to the QueH family.

The enzyme catalyses epoxyqueuosine(34) in tRNA + AH2 = queuosine(34) in tRNA + A + H2O. It functions in the pathway tRNA modification; tRNA-queuosine biosynthesis. Its function is as follows. Catalyzes the conversion of epoxyqueuosine (oQ) to queuosine (Q), which is a hypermodified base found in the wobble positions of tRNA(Asp), tRNA(Asn), tRNA(His) and tRNA(Tyr). The sequence is that of Epoxyqueuosine reductase QueH from Histophilus somni (strain 129Pt) (Haemophilus somnus).